Here is a 364-residue protein sequence, read N- to C-terminus: mRNA decay activator protein ZFP36L2-B (364 aa).

Residues 102–111 (SFSENGERSQ) show a composition bias toward basic and acidic residues. Residues 102–129 (SFSENGERSQHLLHLQQQQQQQKAGAQV) are disordered. The segment covering 113–123 (LLHLQQQQQQQ) has biased composition (low complexity). Positions 133-138 (RYKTEL) match the RNA-binding motif. 2 C3H1-type zinc fingers span residues 133-161 (RYKT…HGFH) and 171-199 (KYKT…HNAE). The tract at residues 150-191 (YGEKCQFAHGFHELRSLTRHPKYKTELCRTFHTIGFCPYGPR) is RNA-binding. The segment at 308 to 350 (SESPVFDAPPSPPDSLSDRDSYLSGSLSSGSLSGSDSPTLDSN) is disordered. The segment covering 329-348 (YLSGSLSSGSLSGSDSPTLD) has biased composition (low complexity).

Post-translationally, phosphorylated. In terms of tissue distribution, remains unlocalized in the egg and early embryo. From stage 21 (late neurula), expressed around the pronephros in the anterior crests, pharyngeal arch, hindbrain, mesodermal tissues around the pronephros and tail-bud. This expression pattern is maintained up to the tadpole stage.

It is found in the nucleus. The protein localises to the cytoplasm. Its function is as follows. Zinc-finger RNA-binding protein that destabilizes several cytoplasmic AU-rich element (ARE)-containing mRNA transcripts by promoting their poly(A) tail removal or deadenylation, and hence provide a mechanism for attenuating protein synthesis. Acts as a 3'-untranslated region (UTR) ARE mRNA-binding adapter protein to communicate signaling events to the mRNA decay machinery. Functions by recruiting the CCR4-NOT deadenylase complex and probably other components of the cytoplasmic RNA decay machinery to the bound ARE-containing mRNAs, and hence promotes ARE-mediated mRNA deadenylation and decay processes. Binds to 3'-UTR ARE of numerous mRNAs. Also induces the degradation of ARE-containing mRNAs even in absence of poly(A) tail. Required for tubulogenesis during pronephros development. In Xenopus laevis (African clawed frog), this protein is mRNA decay activator protein ZFP36L2-B (zfp36l2-B).